We begin with the raw amino-acid sequence, 976 residues long: Villin-2 (976 aa).

6 Gelsolin-like repeats span residues 27 to 77 (FEAV…DEAG), 148 to 188 (IRLK…QERA), 260 to 302 (GKME…DERK), 399 to 450 (GKVK…EDQD), 531 to 571 (NKAV…EQLE), and 633 to 674 (FQVE…KEKQ). The segment at 769 to 917 (NSSSNRPAYS…SEIQPSGATF (149 aa)) is disordered. Basic and acidic residues predominate over residues 782 to 794 (RLNESHDGPRQRA). 3 stretches are compositionally biased toward low complexity: residues 795 to 812 (EALAALSSAFNSSSSSTK), 823 to 841 (SQASQRAAAVAALSQVLVA), and 848 to 858 (DTSPTRRSTSS). S890 is subject to Phosphoserine. The segment covering 908–917 (SEIQPSGATF) has biased composition (polar residues). The region spanning 911–976 (QPSGATFTYE…DLLKKKFDLF (66 aa)) is the HP domain.

Belongs to the villin/gelsolin family. Expressed in all tissues examined. Mainly detected in the root epidermis and vasculature. Expressed in the root cap.

It localises to the cytoplasm. The protein localises to the cytoskeleton. Ca(2+)-regulated actin-binding protein. Involved in actin filaments bundling. Caps the barbed end of actin filaments and is able to sever them in a calcium-dependent manner. Required for the construction of actin collars in pollen tubes. Acts redundantly with VLN5 (AC Q9LVC6) to generate thick actin filament bundles and to regulate polarized pollen tube growth. Acts redundantly with VLN3 (AC O81645) to regulate directional organ growth and in sclerenchyma development. In Arabidopsis thaliana (Mouse-ear cress), this protein is Villin-2.